Reading from the N-terminus, the 345-residue chain is Transcription factor MYB106 (345 aa).

HTH myb-type domains follow at residues 9–61 (KAGL…TNYL) and 62–116 (RPDI…KKRL). DNA-binding regions (H-T-H motif) lie at residues 37–61 (WRSLPEKAGLQRCGKSCRLRWTNYL) and 89–112 (WSAIATHLPKRTDNEIKNYWNTHL).

As to expression, expressed in trichomes, stems, carpels, petals and stamens.

Its subcellular location is the nucleus. Functionally, functions as a repressor of epidermal cell outgrowth and negatively regulate trichome branch formation. Acts both as a positive and a negative regulator of cellular outgrowth. Promotes both trichome expansion and branch formation. Coordinately with WIN1/SHN1, participates in the regulation of cuticle biosynthesis and wax accumulation in reproductive organs and trichomes. Functions in cuticle nanoridge formation in petals and stamens, and in morphogenesis of petal conical cells and trichomes. May play a role in the regulation of cuticle formation in vegetative organs. This chain is Transcription factor MYB106, found in Arabidopsis thaliana (Mouse-ear cress).